A 223-amino-acid chain; its full sequence is Homeobox protein egl-5 (223 aa).

The segment covering 1–25 (MNTSTSAFDFGSSTASSAATSTTSS) has biased composition (low complexity). Disordered regions lie at residues 1–58 (MNTS…STEA) and 168–191 (KKEK…PPKG). The homeobox DNA-binding region spans 112–171 (SKKGRQTYQRYQTSVLEAKFQQSSYVSKKQREELRLQTQLTDRQIKIWFQNRRMKAKKEK).

It belongs to the Abd-B homeobox family. Interacts with the TCF transcription factor pop-1.

The protein localises to the nucleus. Functionally, involved in control of cell fate and pattern formation along the anterior-posterior axis, acting mainly in the tail. Required during embryonic and postembryonic development. Essential for the determination of specific neurons, including the PLM touch neurons. Plays a role in neural fate specification in the hermaphrodite-specific neuron (HSN)/PHB neuron lineage, acting in concert with T-box protein tbx-2 and the asymmetric cell division protein ham-1. Required for male gonadal fate determination, acting in parallel with a WNT/beta-catenin pathway, perhaps by recruiting pop-1 to male-specific gonadal target genes. Involved in development of the hermaphrodite hindgut, and for the response to rectal infection by the coryneform bacterium M.nematophilum. In Caenorhabditis elegans, this protein is Homeobox protein egl-5.